Reading from the N-terminus, the 273-residue chain is Large ribosomal subunit protein uL2cz/uL2cy (273 aa).

2 disordered regions span residues 1 to 22 (MAKH…DRQV) and 225 to 273 (PVDH…RRRK).

The protein belongs to the universal ribosomal protein uL2 family. Part of the 50S ribosomal subunit.

The protein localises to the plastid. It is found in the chloroplast. In Zea mays (Maize), this protein is Large ribosomal subunit protein uL2cz/uL2cy (rpl2-A).